The primary structure comprises 113 residues: Histidine triad nucleotide-binding protein (113 aa).

C5 and C8 together coordinate Zn(2+). The HIT domain occupies 6-113; it reads IFCKIAQKQI…GGKKLAWDKL (108 aa). AMP is bound at residue D31. H47 contacts Zn(2+). AMP contacts are provided by N86, G92, and T94. Residue H97 participates in Zn(2+) binding. Positions 97–101 match the Histidine triad motif motif; that stretch reads HIHFH. The AMP site is built by H99 and H101. H99 serves as the catalytic Tele-AMP-histidine intermediate.

It belongs to the HINT family.

It is found in the nucleus. Its subcellular location is the cytoplasm. It carries out the reaction adenosine 5'-phosphoramidate + H2O = AMP + NH4(+). In terms of biological role, hydrolyzes purine nucleotide phosphoramidates with a single phosphate group, including adenosine 5'monophosphoramidate (AMP-NH2), adenosine 5'monophosphomorpholidate (AMP-morpholidate) and guanosine 5'monophosphomorpholidate (GMP-morpholidate). Hydrolyzes lysyl-AMP (AMP-N-epsilon-(N-alpha-acetyl lysine methyl ester)) generated by lysine tRNA ligase, as well as Met-AMP, His-AMP and Asp-AMP, lysyl-GMP (GMP-N-epsilon-(N-alpha-acetyl lysine methyl ester)) and AMP-N-alanine methyl ester. May also function as scaffolding protein that mediates protein-protein interactions. The chain is Histidine triad nucleotide-binding protein from Entamoeba histolytica (strain ATCC 30459 / HM-1:IMSS / ABRM).